The following is a 394-amino-acid chain: Purine ribonucleoside efflux pump NepI (394 aa).

Residues 1–21 (MSEFIAENRGADAITRPNWSA) are Cytoplasmic-facing. Residues 22–42 (VFSVAFCVACLIIVEFLPVSL) form a helical membrane-spanning segment. The Periplasmic portion of the chain corresponds to 43–54 (LTPMAQDLGISE). Residues 55–75 (GVAGQSVTVTAFVAMFASLFI) traverse the membrane as a helical segment. Over 76 to 85 (TQTIQATDRR) the chain is Cytoplasmic. Residues 86 to 106 (YVVILFAVLLTISCLLVSFAN) traverse the membrane as a helical segment. S107 is a topological domain (periplasmic). A helical membrane pass occupies residues 108 to 128 (FSLLLIGRACLGLALGGFWAM). Topologically, residues 129–147 (SASLTMRLVPPRTVPKALS) are cytoplasmic. The chain crosses the membrane as a helical span at residues 148–168 (VIFGAVSIALVIAAPLGSFLG). Over 169–175 (ELIGWRN) the chain is Periplasmic. A helical membrane pass occupies residues 176-196 (VFNAAAVMGVLCIFWIIKSLP). Over 197 to 215 (SLPGKPSHQKQNTFRLLQR) the chain is Cytoplasmic. The chain crosses the membrane as a helical span at residues 216-236 (PGVMAGMIAIFMSFAGQFAFF). Over 237 to 255 (TYIRPVYMNLAGFGVDGLT) the chain is Periplasmic. A helical membrane pass occupies residues 256-276 (LVLLSFGIASFIGTSLSSFIL). Topologically, residues 277–281 (KRSVK) are cytoplasmic. The helical transmembrane segment at 282–302 (LALAGAPLILAVSALVLTLCG) threads the bilayer. Over 303–305 (SDK) the chain is Periplasmic. Residues 306 to 326 (IVATGVAIIWGLTFALVPVGW) traverse the membrane as a helical segment. At 327–343 (STWSTRSLADQAEKAGS) the chain is on the cytoplasmic side. Residues 344 to 364 (IQVAVIQLANTCGAAIGGYAL) form a helical membrane-spanning segment. At 365–366 (DN) the chain is on the periplasmic side. The chain crosses the membrane as a helical span at residues 367–387 (IGLTSPLMLSGTLMLLTALLV). Residues 388-394 (TAKVKMK) are Cytoplasmic-facing.

It belongs to the major facilitator superfamily. DHA1 family. NepI (TC 2.A.1.2.26) subfamily.

The protein resides in the cell inner membrane. It catalyses the reaction inosine(in) + H(+)(out) = inosine(out) + H(+)(in). The enzyme catalyses guanosine(in) + H(+)(out) = guanosine(out) + H(+)(in). Its function is as follows. Involved in the efflux of purine ribonucleosides, such as inosine and guanosine. The polypeptide is Purine ribonucleoside efflux pump NepI (Shigella dysenteriae serotype 1 (strain Sd197)).